The chain runs to 582 residues: Phosphoribosylaminoimidazole carboxylase (582 aa).

In terms of domain architecture, ATP-grasp spans 114–305; the sequence is KKYLAERGVA…QFENHLRAIL (192 aa). 143–200 is a binding site for ATP; the sequence is AGRLGLPLMLKAKTLAYDGRGNSPLKSASSEDIQASLKFLGDRPLYAEGWAPFVKEVA.

It in the C-terminal section; belongs to the AIR carboxylase family. Class I subfamily.

It catalyses the reaction 5-amino-1-(5-phospho-D-ribosyl)imidazole-4-carboxylate + H(+) = 5-amino-1-(5-phospho-beta-D-ribosyl)imidazole + CO2. It participates in purine metabolism; IMP biosynthesis via de novo pathway; 5-amino-1-(5-phospho-D-ribosyl)imidazole-4-carboxylate from 5-amino-1-(5-phospho-D-ribosyl)imidazole (carboxylase route): step 1/1. The polypeptide is Phosphoribosylaminoimidazole carboxylase (ADE2) (Cryptococcus neoformans var. neoformans serotype D (strain B-3501A) (Filobasidiella neoformans)).